The following is a 334-amino-acid chain: Trans-O-hydroxybenzylidenepyruvate hydratase-aldolase (334 aa).

It belongs to the DapA family.

The catalysed reaction is (3E)-4-(2-hydroxyphenyl)-2-oxobut-3-enoate + H2O = salicylaldehyde + pyruvate. It participates in aromatic compound metabolism; naphthalene degradation. Functionally, involved in the naphthalene upper catabolic pathway. Catalyzes the transformation of trans-O-hydroxybenzylidenepyruvate (THBPA) to salicylaldehyde and pyruvate. The reaction is reversible. This Pseudomonas aeruginosa protein is Trans-O-hydroxybenzylidenepyruvate hydratase-aldolase (pahE).